We begin with the raw amino-acid sequence, 443 residues long: Leucine/methionine racemase (443 aa).

Residues 110 to 111 and Q247 contribute to the pyridoxal 5'-phosphate site; that span reads GS. K273 bears the N6-(pyridoxal phosphate)lysine mark. T302 contacts pyridoxal 5'-phosphate.

This sequence belongs to the class-III pyridoxal-phosphate-dependent aminotransferase family. Pyridoxal 5'-phosphate is required as a cofactor.

It catalyses the reaction L-leucine = D-leucine. The enzyme catalyses L-methionine = D-methionine. Activity is strongly inhibited by several metal ions, including Co(2+), Zn(2+), Ni(2+), Cu(2+) and Fe(3+), and nonsubstrate amino acids such as L-arginine and L-lysine. Activity is completely abolished in the presence of hydroxylamine, an inhibitor of pyridoxal phosphate-dependent enzymes. Its function is as follows. Amino acid racemase with moderate substrate specificity. Is primarily active toward leucine, which is the preferred substrate, and methionine. Also exhibits lower levels of activity toward phenylalanine, alanine and serine. The sequence is that of Leucine/methionine racemase from Thermococcus litoralis (strain ATCC 51850 / DSM 5473 / JCM 8560 / NS-C).